Here is a 320-residue protein sequence, read N- to C-terminus: L-lactate dehydrogenase (320 aa).

Residues Phe-15 to Val-16, Asp-37, Lys-42, Tyr-68, and Gly-82 to Ala-83 contribute to the NAD(+) site. Substrate contacts are provided by residues Gln-85, Arg-91, and Asn-123 to Asp-126. Residues Ala-121 to Asn-123 and Ser-146 each bind NAD(+). A substrate-binding site is contributed by Asp-151 to Arg-154. Residues Arg-156 and Gln-168–Ala-172 each bind beta-D-fructose 1,6-bisphosphate. His-178 serves as the catalytic Proton acceptor. Tyr-223 is modified (phosphotyrosine). Thr-232 provides a ligand contact to substrate.

It belongs to the LDH/MDH superfamily. LDH family. In terms of assembly, homotetramer.

It is found in the cytoplasm. It catalyses the reaction (S)-lactate + NAD(+) = pyruvate + NADH + H(+). It functions in the pathway fermentation; pyruvate fermentation to lactate; (S)-lactate from pyruvate: step 1/1. Allosterically activated by fructose 1,6-bisphosphate (FBP). In terms of biological role, catalyzes the conversion of lactate to pyruvate. The protein is L-lactate dehydrogenase of Bacillus subtilis (strain 168).